The primary structure comprises 208 residues: MSKVLFVKANDRPAEQAVSSKMYETFVNTYKEANPNTEITELDLFALDLPYYGNIAISGGYKRSQGMELTAEEEKAVATVDQYLNQFLEADKVVFAFPLWNFTVPAPLITYISYLSQAGKTFKYTANGPEGLAGGKKVVVLGARGSDYSSEQMAPMEMAVNYVTTVLGFWGITNPETVVIEGHNQYPDRSQQIVEEGLENVKKVAAKF.

The protein belongs to the azoreductase type 1 family. Homodimer. It depends on FMN as a cofactor.

The enzyme catalyses 2 a quinone + NADH + H(+) = 2 a 1,4-benzosemiquinone + NAD(+). It carries out the reaction N,N-dimethyl-1,4-phenylenediamine + anthranilate + 2 NAD(+) = 2-(4-dimethylaminophenyl)diazenylbenzoate + 2 NADH + 2 H(+). Quinone reductase that provides resistance to thiol-specific stress caused by electrophilic quinones. Functionally, also exhibits azoreductase activity. Catalyzes the reductive cleavage of the azo bond in aromatic azo compounds to the corresponding amines. The polypeptide is FMN-dependent NADH:quinone oxidoreductase 1 (Bacillus thuringiensis subsp. konkukian (strain 97-27)).